We begin with the raw amino-acid sequence, 201 residues long: Small ribosomal subunit protein uS4 (201 aa).

The segment at 26–46 (LARRAYAPGDHGRDRRGKLSE) is disordered. Over residues 35–44 (DHGRDRRGKL) the composition is skewed to basic and acidic residues. Positions 93 to 156 (RRLDNMVYRL…KNLDIIKNAV (64 aa)) constitute an S4 RNA-binding domain.

Belongs to the universal ribosomal protein uS4 family. In terms of assembly, part of the 30S ribosomal subunit. Contacts protein S5. The interaction surface between S4 and S5 is involved in control of translational fidelity.

In terms of biological role, one of the primary rRNA binding proteins, it binds directly to 16S rRNA where it nucleates assembly of the body of the 30S subunit. Its function is as follows. With S5 and S12 plays an important role in translational accuracy. The chain is Small ribosomal subunit protein uS4 from Limosilactobacillus reuteri (strain DSM 20016) (Lactobacillus reuteri).